Reading from the N-terminus, the 357-residue chain is DNA integrity scanning protein DisA (357 aa).

Positions 8–148 (PQELIEKIKL…NYKYVVNQVD (141 aa)) constitute a DAC domain. Positions 76, 94, 107, 111, and 128 each coordinate 3',3'-c-di-AMP.

The protein belongs to the DisA family. In terms of assembly, homooctamer. Requires Mg(2+) as cofactor.

The enzyme catalyses 2 ATP = 3',3'-c-di-AMP + 2 diphosphate. Inhibited by 3'-dATP. Functionally, participates in a DNA-damage check-point. DisA forms globular foci that rapidly scan along the chromosomes searching for lesions. Has diadenylate cyclase activity, catalyzing the condensation of 2 ATP molecules into cyclic di-AMP (c-di-AMP). c-di-AMP likely acts as a signaling molecule that may couple DNA integrity with a cellular process. This rate-limiting step is the accessibility of the active site; mutating the possible exit tunnel (residues 128-130) increases product 2-fold despite Arg-130 being important for ATP-binding. Does not convert GTP to c-di-GMP. The protein is DNA integrity scanning protein DisA of Thermotoga maritima (strain ATCC 43589 / DSM 3109 / JCM 10099 / NBRC 100826 / MSB8).